The primary structure comprises 29 residues: Trypsin inhibitor 2 (29 aa).

3 cysteine pairs are disulfide-bonded: Cys-3–Cys-20, Cys-10–Cys-22, and Cys-16–Cys-28.

This sequence belongs to the protease inhibitor I7 (squash-type serine protease inhibitor) family.

The protein localises to the secreted. Its function is as follows. Inhibits trypsin. The protein is Trypsin inhibitor 2 of Bryonia dioica (Red bryony).